An 85-amino-acid polypeptide reads, in one-letter code: U4-theraphotoxin-Hhn1r (85 aa).

Positions 1–22 are cleaved as a signal peptide; sequence MKVTLIAILTCAAVLVLHTTAA. Residues 23-48 constitute a propeptide that is removed on maturation; the sequence is EELEAESQLMEVGMPDTELAAVDEER. Intrachain disulfides connect cysteine 52-cysteine 66, cysteine 56-cysteine 77, and cysteine 71-cysteine 82.

The protein belongs to the neurotoxin 12 (Hwtx-2) family. 02 (Hwtx-2) subfamily. Expressed by the venom gland.

Its subcellular location is the secreted. Its function is as follows. Postsynaptic neurotoxin. This is U4-theraphotoxin-Hhn1r from Cyriopagopus hainanus (Chinese bird spider).